Consider the following 276-residue polypeptide: ATP synthase subunit a (276 aa).

The next 6 membrane-spanning stretches (helical) occupy residues 27 to 47 (ITML…LEVG), 61 to 81 (GQTF…SLAA), 120 to 140 (LPFI…GALL), 159 to 179 (DINT…YAGL), 225 to 245 (LVVA…LMAL), and 246 to 266 (GLFT…AYIH).

The protein belongs to the ATPase A chain family. As to quaternary structure, F-type ATPases have 2 components, CF(1) - the catalytic core - and CF(0) - the membrane proton channel. CF(1) has five subunits: alpha(3), beta(3), gamma(1), delta(1), epsilon(1). CF(0) has four main subunits: a, b, b' and c.

It is found in the cellular thylakoid membrane. In terms of biological role, key component of the proton channel; it plays a direct role in the translocation of protons across the membrane. In Synechocystis sp. (strain ATCC 27184 / PCC 6803 / Kazusa), this protein is ATP synthase subunit a.